The following is a 1171-amino-acid chain: ATP-dependent helicase/deoxyribonuclease subunit B (1171 aa).

The UvrD-like helicase ATP-binding domain maps to 1–390; it reads MSLRFVIGRA…HPLVECIRSA (390 aa). 8–15 is a binding site for ATP; the sequence is GRAGSGKS. Residues 281–587 enclose the UvrD-like helicase C-terminal domain; it reads MEQPRFHSPA…QFANIPPSLD (307 aa). Cys-805, Cys-1129, Cys-1132, and Cys-1138 together coordinate [4Fe-4S] cluster.

Belongs to the helicase family. AddB/RexB type 1 subfamily. In terms of assembly, heterodimer of AddA and AddB. Mg(2+) serves as cofactor. The cofactor is [4Fe-4S] cluster.

In terms of biological role, the heterodimer acts as both an ATP-dependent DNA helicase and an ATP-dependent, dual-direction single-stranded exonuclease. Recognizes the chi site generating a DNA molecule suitable for the initiation of homologous recombination. The AddB subunit has 5' -&gt; 3' nuclease activity but not helicase activity. This Bacillus cereus (strain ZK / E33L) protein is ATP-dependent helicase/deoxyribonuclease subunit B.